Reading from the N-terminus, the 362-residue chain is Histidinol-phosphate aminotransferase (362 aa).

K218 is modified (N6-(pyridoxal phosphate)lysine).

The protein belongs to the class-II pyridoxal-phosphate-dependent aminotransferase family. Histidinol-phosphate aminotransferase subfamily. As to quaternary structure, homodimer. The cofactor is pyridoxal 5'-phosphate.

The enzyme catalyses L-histidinol phosphate + 2-oxoglutarate = 3-(imidazol-4-yl)-2-oxopropyl phosphate + L-glutamate. It participates in amino-acid biosynthesis; L-histidine biosynthesis; L-histidine from 5-phospho-alpha-D-ribose 1-diphosphate: step 7/9. The chain is Histidinol-phosphate aminotransferase from Xanthomonas campestris pv. campestris (strain ATCC 33913 / DSM 3586 / NCPPB 528 / LMG 568 / P 25).